Here is a 279-residue protein sequence, read N- to C-terminus: Sulfur carrier protein FdhD (279 aa).

Cys-112 functions as the Cysteine persulfide intermediate in the catalytic mechanism.

Belongs to the FdhD family.

It is found in the cytoplasm. Required for formate dehydrogenase (FDH) activity. Acts as a sulfur carrier protein that transfers sulfur from IscS to the molybdenum cofactor prior to its insertion into FDH. In Nocardia farcinica (strain IFM 10152), this protein is Sulfur carrier protein FdhD.